The primary structure comprises 682 residues: Homeobox-leucine zipper protein HDG7 (682 aa).

A disordered region spans residues 33-65; the sequence is LSDDSFDAMSGDEDKQEQRPKKKKRKTKYHRHT. Residues 52-65 are compositionally biased toward basic residues; the sequence is PKKKKRKTKYHRHT. Positions 57 to 116 form a DNA-binding region, homeobox; sequence RKTKYHRHTSYQIQELESFFKECPHPNEKQRLELGKKLTLESKQIKFWFQNRRTQMKTQL. Residues 105–186 adopt a coiled-coil conformation; that stretch reads FQNRRTQMKT…LDRICALANR (82 aa). The START domain occupies 214-429; that stretch reads SGGTSLMFMD…LQRQCESFTM (216 aa).

This sequence belongs to the HD-ZIP homeobox family. Class IV subfamily. In terms of assembly, interacts with AIL7/PLT7. As to expression, expressed in cells around the base of leaf primordia, in the outermost 2 to 3 cell layers along the boundary between two leaf primordia. Expressed in lateral root primordia and tips, and in the epidermal boundaries of two cotyledons at heart-stage embryo.

It localises to the nucleus. In terms of biological role, probable transcription factor that binds to the DNA sequence 5'-GCATTAAATGC-3'. Seems to promote cell differentiation. This chain is Homeobox-leucine zipper protein HDG7, found in Arabidopsis thaliana (Mouse-ear cress).